The chain runs to 143 residues: Synuclein (143 aa).

3 consecutive repeat copies span residues 20 to 30, 31 to 41, and 42 to 52. The 5 X 11 AA tandem repeats of [EGST]-K-T-K-[EQ]-[GQ]-[VA]-X(4) stretch occupies residues 20–78; the sequence is EKTKQGVQDAAEKTKQGVQDAAEKTKEGVMYVGTKTKEGVVQSVNTVTEKTKEQANVVG. A 4; approximate repeat occupies 53-67; it reads TKTKEGVVQSVNTVT. Residues 68–78 form repeat 5; the sequence is EKTKEQANVVG. Residues 113–143 form a disordered region; that stretch reads REIPAEQVAEGKQTTQEPLVEATEATEETGK.

This sequence belongs to the synuclein family. Nervous system tissue. Found in the electric lobe, the brain and the spinal cord.

The protein resides in the nucleus. May have a role in synaptic regulation or signal transduction. The protein is Synuclein of Tetronarce californica (Pacific electric ray).